Reading from the N-terminus, the 369-residue chain is Putative 2-aminoethylphosphonate import ATP-binding protein PhnT (369 aa).

Residues 19 to 250 (IVLDSLRVAY…PPNRFAAEFL (232 aa)) enclose the ABC transporter domain. 51–58 (GPSGSGKT) is a binding site for ATP.

Belongs to the ABC transporter superfamily. 2-aminoethylphosphonate importer (TC 3.A.1.11.5) family.

The protein localises to the cell inner membrane. Probably part of the PhnSTUV complex (TC 3.A.1.11.5) involved in 2-aminoethylphosphonate import. Probably responsible for energy coupling to the transport system. The sequence is that of Putative 2-aminoethylphosphonate import ATP-binding protein PhnT (phnT) from Salmonella typhi.